A 156-amino-acid polypeptide reads, in one-letter code: Arginine repressor (156 aa).

It belongs to the ArgR family.

The protein resides in the cytoplasm. It functions in the pathway amino-acid biosynthesis; L-arginine biosynthesis [regulation]. In terms of biological role, regulates arginine biosynthesis genes. The sequence is that of Arginine repressor from Vibrio cholerae serotype O1 (strain ATCC 39315 / El Tor Inaba N16961).